We begin with the raw amino-acid sequence, 316 residues long: L-lactate dehydrogenase (316 aa).

NAD(+) is bound by residues Val15, Asp37, Lys42, Tyr68, and 82-83 (GL). Residues Gln85, Arg91, and 123 to 126 (NPVD) contribute to the substrate site. Residues 121-123 (ASN) and Thr146 contribute to the NAD(+) site. Position 151–154 (151–154 (DTSR)) interacts with substrate. The beta-D-fructose 1,6-bisphosphate site is built by Arg156 and His171. Catalysis depends on His178, which acts as the Proton acceptor. Phosphotyrosine is present on Tyr222. Thr231 provides a ligand contact to substrate.

The protein belongs to the LDH/MDH superfamily. LDH family. Homotetramer.

It localises to the cytoplasm. It carries out the reaction (S)-lactate + NAD(+) = pyruvate + NADH + H(+). Its pathway is fermentation; pyruvate fermentation to lactate; (S)-lactate from pyruvate: step 1/1. Allosterically activated by fructose 1,6-bisphosphate (FBP). Catalyzes the conversion of lactate to pyruvate. The protein is L-lactate dehydrogenase of Borrelia garinii subsp. bavariensis (strain ATCC BAA-2496 / DSM 23469 / PBi) (Borreliella bavariensis).